Consider the following 793-residue polypeptide: Xaa-Pro dipeptidyl-peptidase (793 aa).

Residues Ser363, Asp483, and His514 each act as charge relay system in the active site.

Belongs to the peptidase S15 family. Homodimer.

It is found in the cytoplasm. It carries out the reaction Hydrolyzes Xaa-Pro-|- bonds to release unblocked, N-terminal dipeptides from substrates including Ala-Pro-|-p-nitroanilide and (sequentially) Tyr-Pro-|-Phe-Pro-|-Gly-Pro-|-Ile.. In terms of biological role, removes N-terminal dipeptides sequentially from polypeptides having unsubstituted N-termini provided that the penultimate residue is proline. This is Xaa-Pro dipeptidyl-peptidase from Lactobacillus helveticus (strain DPC 4571).